The chain runs to 128 residues: Large ribosomal subunit protein bL20c (128 aa).

Belongs to the bacterial ribosomal protein bL20 family.

Its subcellular location is the plastid. It localises to the chloroplast. Binds directly to 23S ribosomal RNA and is necessary for the in vitro assembly process of the 50S ribosomal subunit. It is not involved in the protein synthesizing functions of that subunit. The chain is Large ribosomal subunit protein bL20c from Nicotiana sylvestris (Wood tobacco).